The primary structure comprises 276 residues: MKISKTKTPKLVLIAGPCVIESLDNLRGIAIKLQPLANNERLDFYFKASFDKANRTSLESYRGPGLEKGLEMLQAIKDEFGYKILTDVHESYQVSIAVKVADILQIPAFLCRQTDLIVEVSQTNAIINIKKGQFMSPKDMQYSVLKALKTRDKNIQNPTYENALANGVWLCERGSSFGYGNLVVDMRSLKIMREFAPVIFDATHSVQMPGGANGKSSGESSFAPILARAAAAVGVDGLFAETHIDPKNALSDGANMLKPNELESLVTDMLKIQNLF.

Belongs to the KdsA family.

The protein localises to the cytoplasm. The enzyme catalyses D-arabinose 5-phosphate + phosphoenolpyruvate + H2O = 3-deoxy-alpha-D-manno-2-octulosonate-8-phosphate + phosphate. The protein operates within carbohydrate biosynthesis; 3-deoxy-D-manno-octulosonate biosynthesis; 3-deoxy-D-manno-octulosonate from D-ribulose 5-phosphate: step 2/3. Its pathway is bacterial outer membrane biogenesis; lipopolysaccharide biosynthesis. This is 2-dehydro-3-deoxyphosphooctonate aldolase from Helicobacter acinonychis (strain Sheeba).